Here is a 120-residue protein sequence, read N- to C-terminus: NAD(P)H-quinone oxidoreductase subunit 3, chloroplastic (120 aa).

3 helical membrane passes run 9–29, 64–84, and 88–108; these read IFWAFLMISSVIPILAFIISG, MFALVFVVFDVETVFLYPWAV, and VLGVSVFIEALIFVLIPVVGS.

This sequence belongs to the complex I subunit 3 family. NDH is composed of at least 16 different subunits, 5 of which are encoded in the nucleus.

Its subcellular location is the plastid. The protein resides in the chloroplast thylakoid membrane. The enzyme catalyses a plastoquinone + NADH + (n+1) H(+)(in) = a plastoquinol + NAD(+) + n H(+)(out). The catalysed reaction is a plastoquinone + NADPH + (n+1) H(+)(in) = a plastoquinol + NADP(+) + n H(+)(out). Its function is as follows. NDH shuttles electrons from NAD(P)H:plastoquinone, via FMN and iron-sulfur (Fe-S) centers, to quinones in the photosynthetic chain and possibly in a chloroplast respiratory chain. The immediate electron acceptor for the enzyme in this species is believed to be plastoquinone. Couples the redox reaction to proton translocation, and thus conserves the redox energy in a proton gradient. This Nuphar advena (Common spatterdock) protein is NAD(P)H-quinone oxidoreductase subunit 3, chloroplastic.